A 200-amino-acid chain; its full sequence is Golgi to ER traffic protein 1 (200 aa).

Topologically, residues 1-6 are lumenal; that stretch reads MEPYTL. The helical transmembrane segment at 7 to 26 threads the bilayer; sequence LLFIFVIQIVKQIISAVGKQ. Residues 27–113 lie on the Cytoplasmic side of the membrane; sequence SIESISWVLY…KVNTFTGYLI (87 aa). The stretch at 75–107 forms a coiled coil; the sequence is AKWTKLNRQHDKLVAEIEQLQKEVDLDKVKVNT. A helical transmembrane segment spans residues 114-134; it reads AILTSIPIWFFRVWYRSVVLF. The Lumenal segment spans residues 135-158; it reads YFPPGILPRALEWSIALPFTVTGG. A helical transmembrane segment spans residues 159-175; the sequence is VSLTVWMMAAGAVASSL. Topologically, residues 176–200 are cytoplasmic; the sequence is TFLFMFPFEKAVPKPVLAKKSPQQL.

This sequence belongs to the WRB/GET1 family. In terms of assembly, component of the Golgi to ER traffic (GET) complex, which is composed of GET1, GET2 and GET3. Within the complex, GET1 and GET2 form a heterotetramer which is stabilized by phosphatidylinositol binding and which binds to the GET3 homodimer.

It localises to the endoplasmic reticulum membrane. It is found in the golgi apparatus membrane. Required for the post-translational delivery of tail-anchored (TA) proteins to the endoplasmic reticulum. Together with GET2, acts as a membrane receptor for soluble GET3, which recognizes and selectively binds the transmembrane domain of TA proteins in the cytosol. The GET complex cooperates with the HDEL receptor ERD2 to mediate the ATP-dependent retrieval of resident ER proteins that contain a C-terminal H-D-E-L retention signal from the Golgi to the ER. The protein is Golgi to ER traffic protein 1 of Meyerozyma guilliermondii (strain ATCC 6260 / CBS 566 / DSM 6381 / JCM 1539 / NBRC 10279 / NRRL Y-324) (Yeast).